Here is a 188-residue protein sequence, read N- to C-terminus: Ribosome-recycling factor (188 aa).

Belongs to the RRF family.

Its subcellular location is the cytoplasm. Functionally, responsible for the release of ribosomes from messenger RNA at the termination of protein biosynthesis. May increase the efficiency of translation by recycling ribosomes from one round of translation to another. The sequence is that of Ribosome-recycling factor from Anaeromyxobacter sp. (strain K).